The sequence spans 488 residues: Alpha,alpha-trehalose-phosphate synthase [UDP-forming] 56 kDa subunit (488 aa).

D-glucose 6-phosphate contacts are provided by Tyr102 and Asp156. UDP contacts are provided by Arg293 and Lys298. UDP-alpha-D-glucose-binding residues include Arg293 and Lys298. D-glucose 6-phosphate is bound at residue Arg331. Residues Ile370 and 396–400 (LVSYE) contribute to the UDP site. UDP-alpha-D-glucose-binding positions include Ile370 and 392–400 (DGMNLVSYE).

This sequence belongs to the glycosyltransferase 20 family. As to quaternary structure, trehalose synthase/phosphatase complex contains three or four polypeptides of 56 kDa (TPS1), 102 kDa (TPS2), 115 kDa (TPS3) and 123 kDa (TSL1).

The catalysed reaction is D-glucose 6-phosphate + UDP-alpha-D-glucose = alpha,alpha-trehalose 6-phosphate + UDP + H(+). It participates in carbohydrate biosynthesis. Functionally, synthase catalytic subunit of the trehalose synthase complex that catalyzes the production of trehalose from glucose-6-phosphate and UDP-alpha-D-glucose in a two step process. Can function independently of the complex. In Kluyveromyces lactis (strain ATCC 8585 / CBS 2359 / DSM 70799 / NBRC 1267 / NRRL Y-1140 / WM37) (Yeast), this protein is Alpha,alpha-trehalose-phosphate synthase [UDP-forming] 56 kDa subunit.